An 88-amino-acid chain; its full sequence is Small ribosomal subunit protein bS16 (88 aa).

The protein belongs to the bacterial ribosomal protein bS16 family.

This is Small ribosomal subunit protein bS16 from Leptospira borgpetersenii serovar Hardjo-bovis (strain L550).